A 193-amino-acid chain; its full sequence is uncharacterized protein (193 aa).

2 disordered regions span residues 1–67 (MSGP…GPRS) and 110–160 (QRTP…LPGS). 2 stretches are compositionally biased toward low complexity: residues 50 to 64 (GPQRGPRNAAAARPG) and 148 to 160 (AGASPGSRLLPGS).

This is an uncharacterized protein from Homo sapiens (Human).